Here is a 306-residue protein sequence, read N- to C-terminus: MLKGKSLLCLLDFSKQEIEKMMEVSFQMKNFHMLRSVPRSLDGKTVAMLFEKPSTRTRVSFETAIRLLGGNPIVLNKSDIQLSRGEPVEDTARVLGRFVDGIAARVLKHETLELLAKYSNKPTINLLSDLSHPLQALADFMTIKEKFGEYTSLTFVGDGGDNVLVSLMAFVAKMGLEIKIASPKEFKPRDDIMKRIEEEAEKSGAIIEFYEDPYEAVRGSKVVYTDVWVSMGQESIAEKKKELLRNYRVSVDLMRYASKDAIFMHCLPAVRGEEVENEVIDGPKSAVWDQAENRLYTAMSVLSLLL.

Residues 54–57, glutamine 81, arginine 105, and 132–135 contribute to the carbamoyl phosphate site; these read STRT and HPLQ. L-ornithine-binding positions include asparagine 162, aspartate 226, and 230–231; that span reads SM. Carbamoyl phosphate-binding positions include 266-267 and arginine 294; that span reads CL.

It belongs to the aspartate/ornithine carbamoyltransferase superfamily. OTCase family.

It localises to the cytoplasm. It catalyses the reaction carbamoyl phosphate + L-ornithine = L-citrulline + phosphate + H(+). It functions in the pathway amino-acid biosynthesis; L-arginine biosynthesis; L-arginine from L-ornithine and carbamoyl phosphate: step 1/3. Functionally, reversibly catalyzes the transfer of the carbamoyl group from carbamoyl phosphate (CP) to the N(epsilon) atom of ornithine (ORN) to produce L-citrulline. The chain is Ornithine carbamoyltransferase from Sulfurisphaera tokodaii (strain DSM 16993 / JCM 10545 / NBRC 100140 / 7) (Sulfolobus tokodaii).